We begin with the raw amino-acid sequence, 623 residues long: DEAD-box ATP-dependent RNA helicase 52C (623 aa).

Residues 1-120 (MATPSRTSWA…DGDAAAGAGD (120 aa)) form a disordered region. Residues 10–29 (ADVADADPAPAPAPAANGPA) are compositionally biased toward low complexity. The segment covering 54–69 (APPPSSSSSSAPPPRA) has biased composition (pro residues). Positions 70-83 (APGLLAPRPAAAGM) are enriched in low complexity. Gly residues predominate over residues 84–97 (GRMGGGGGGGGFGG). Residues 155–183 (GTFAEIDLGQALNDNIRRCKYVRPTPVQR) carry the Q motif motif. The Helicase ATP-binding domain occupies 186 to 372 (IPISLAGRDL…SDFLENYIFL (187 aa)). An ATP-binding site is contributed by 199 to 206 (AQTGSGKT). Residues 316-319 (DEAD) carry the DEAD box motif. The region spanning 399 to 550 (HLMDLLHAQR…EVPAWLSRYA (152 aa)) is the Helicase C-terminal domain. The disordered stretch occupies residues 553–595 (PSYGGGGGRNRRSGGGSRFGGRDFRRDSSSGRGGGDYYGGGSS). Gly residues predominate over residues 555–571 (YGGGGGRNRRSGGGSRF). Positions 572-581 (GGRDFRRDSS) are enriched in basic and acidic residues. The span at 583–595 (GRGGGDYYGGGSS) shows a compositional bias: gly residues.

It belongs to the DEAD box helicase family. DDX3/DED1 subfamily.

The enzyme catalyses ATP + H2O = ADP + phosphate + H(+). This chain is DEAD-box ATP-dependent RNA helicase 52C, found in Oryza sativa subsp. japonica (Rice).